Here is a 598-residue protein sequence, read N- to C-terminus: NADH-quinone oxidoreductase subunit C/D (598 aa).

Residues 1–189 (MTDSTTHDRE…DPFELTRQKQ (189 aa)) are NADH dehydrogenase I subunit C. Residues 213 to 598 (DFMFLNLGPN…IDFVMSDVDR (386 aa)) are NADH dehydrogenase I subunit D.

It in the N-terminal section; belongs to the complex I 30 kDa subunit family. In the C-terminal section; belongs to the complex I 49 kDa subunit family. As to quaternary structure, NDH-1 is composed of 13 different subunits. Subunits NuoB, CD, E, F, and G constitute the peripheral sector of the complex.

The protein resides in the cell inner membrane. The catalysed reaction is a quinone + NADH + 5 H(+)(in) = a quinol + NAD(+) + 4 H(+)(out). Functionally, NDH-1 shuttles electrons from NADH, via FMN and iron-sulfur (Fe-S) centers, to quinones in the respiratory chain. The immediate electron acceptor for the enzyme in this species is believed to be ubiquinone. Couples the redox reaction to proton translocation (for every two electrons transferred, four hydrogen ions are translocated across the cytoplasmic membrane), and thus conserves the redox energy in a proton gradient. The protein is NADH-quinone oxidoreductase subunit C/D of Edwardsiella ictaluri (strain 93-146).